A 290-amino-acid polypeptide reads, in one-letter code: Zinc finger AN1 and C2H2 domain-containing stress-associated protein 16 (290 aa).

2 AN1-type zinc fingers span residues 7–55 (PNLG…QKDV) and 95–145 (VTKK…KPES). The Zn(2+) site is built by Cys-13, Cys-18, Cys-28, Cys-31, Cys-36, His-39, His-45, Cys-47, Cys-101, Cys-106, Cys-118, Cys-121, Cys-126, His-129, His-135, and Cys-137. C2H2-type zinc fingers lie at residues 224–247 (EQCV…EKSH) and 261–284 (DVCP…ERDH).

May be involved in environmental stress response. This is Zinc finger AN1 and C2H2 domain-containing stress-associated protein 16 (SAP16) from Oryza sativa subsp. japonica (Rice).